The primary structure comprises 386 residues: NADH kinase pos5, mitochondrial (386 aa).

A mitochondrion-targeting transit peptide spans 1–42 (MIRAANGFRISVRNTAVCLAPNFRQLKGFSIINLGSLQYFRY).

Belongs to the NAD kinase family.

Its subcellular location is the mitochondrion. It carries out the reaction NADH + ATP = ADP + NADPH + H(+). Phosphorylates both NADH and NAD(+), with a preference for NADH. Anti-oxidant factor and key source of the cellular reductant NADPH. This Schizosaccharomyces pombe (strain 972 / ATCC 24843) (Fission yeast) protein is NADH kinase pos5, mitochondrial (pos5).